Here is a 299-residue protein sequence, read N- to C-terminus: tRNA pseudouridine synthase B (299 aa).

The active-site Nucleophile is the aspartate 39.

The protein belongs to the pseudouridine synthase TruB family. Type 1 subfamily.

The catalysed reaction is uridine(55) in tRNA = pseudouridine(55) in tRNA. In terms of biological role, responsible for synthesis of pseudouridine from uracil-55 in the psi GC loop of transfer RNAs. This is tRNA pseudouridine synthase B from Syntrophomonas wolfei subsp. wolfei (strain DSM 2245B / Goettingen).